Here is a 1534-residue protein sequence, read N- to C-terminus: ABC transporter G family member 6 (1534 aa).

The segment covering 1-11 (MAKQDPKDKNS) has biased composition (basic and acidic residues). Residues 1 to 85 (MAKQDPKDKN…ESNYDSDDEK (85 aa)) are disordered. A compositionally biased stretch (low complexity) spans 21–65 (NNNNNENLDNDQELLNNNNNNNNNNNNNNNNNNNNNNNNNNNNNL). The region spanning 138 to 385 (VYCRNATYTV…FKKLGFACPS (248 aa)) is the ABC transporter 1 domain. 177–184 (GTPGCGKS) contacts ATP. Residues 481–757 (RRNYYNFLTR…VVCFFALKYF (277 aa)) form the ABC transmembrane type-2 1 domain. 7 consecutive transmembrane segments (helical) span residues 486–506 (NFLT…TLYW), 521–541 (LLFF…NSFF), 566–586 (IICD…IVYW), 592–612 (PVFI…NLSL), 625–645 (IEIA…FSGF), 652–672 (IGGW…FQGL), and 734–754 (VVFG…FFAL). Residues 781–907 (KQDEESAAIS…KSKNGKDIGS (127 aa)) form a disordered region. Residues 797-808 (IDDDNDDDADYE) show a composition bias toward acidic residues. Residues 830–841 (SPSSLTTGSPYY) show a composition bias toward polar residues. Residues 842–856 (NINNNNNNLSGSGNN) are compositionally biased toward low complexity. Over residues 864-873 (TPSNLSPSVN) the composition is skewed to polar residues. Positions 874 to 896 (SPITINSPMPTSPSNNNNNNNSN) are enriched in low complexity. Positions 897 to 906 (EKSKNGKDIG) are enriched in basic and acidic residues. Residues 924-1166 (VKVDDPDNPK…VILDYCDKLG (243 aa)) form the ABC transporter 2 domain. An ATP-binding site is contributed by 960-967 (GPSGAGKS). An ABC transmembrane type-2 2 domain is found at 1256–1529 (LRRPAIFVSN…GLSFWGFKKI (274 aa)). The next 6 helical transmembrane spans lie at 1261-1281 (IFVS…TLFV), 1296-1316 (LLFF…PTTV), 1345-1365 (YPFT…IAGL), 1377-1397 (CLFI…CLAV), 1404-1424 (MAST…GFVI), and 1506-1526 (IDIA…FWGF).

Belongs to the ABC transporter superfamily. ABCG family. PDR (TC 3.A.1.205) subfamily.

The protein localises to the membrane. The chain is ABC transporter G family member 6 (abcG6) from Dictyostelium discoideum (Social amoeba).